Reading from the N-terminus, the 333-residue chain is Ketol-acid reductoisomerase (NADP(+)) (333 aa).

Positions 2–182 (AKIFYDSDCN…GASRAGIILT (181 aa)) constitute a KARI N-terminal Rossmann domain. NADP(+) contacts are provided by residues 25-28 (FGSQ), S51, S53, and 83-86 (DEKQ). H108 is a catalytic residue. G134 serves as a coordination point for NADP(+). One can recognise a KARI C-terminal knotted domain in the interval 183–328 (TFKEETETDL…KELRKMMPWI (146 aa)). Positions 191, 195, 227, and 231 each coordinate Mg(2+). S252 contributes to the substrate binding site.

This sequence belongs to the ketol-acid reductoisomerase family. Requires Mg(2+) as cofactor.

It carries out the reaction (2R)-2,3-dihydroxy-3-methylbutanoate + NADP(+) = (2S)-2-acetolactate + NADPH + H(+). It catalyses the reaction (2R,3R)-2,3-dihydroxy-3-methylpentanoate + NADP(+) = (S)-2-ethyl-2-hydroxy-3-oxobutanoate + NADPH + H(+). It functions in the pathway amino-acid biosynthesis; L-isoleucine biosynthesis; L-isoleucine from 2-oxobutanoate: step 2/4. The protein operates within amino-acid biosynthesis; L-valine biosynthesis; L-valine from pyruvate: step 2/4. Its function is as follows. Involved in the biosynthesis of branched-chain amino acids (BCAA). Catalyzes an alkyl-migration followed by a ketol-acid reduction of (S)-2-acetolactate (S2AL) to yield (R)-2,3-dihydroxy-isovalerate. In the isomerase reaction, S2AL is rearranged via a Mg-dependent methyl migration to produce 3-hydroxy-3-methyl-2-ketobutyrate (HMKB). In the reductase reaction, this 2-ketoacid undergoes a metal-dependent reduction by NADPH to yield (R)-2,3-dihydroxy-isovalerate. This is Ketol-acid reductoisomerase (NADP(+)) from Caldicellulosiruptor bescii (strain ATCC BAA-1888 / DSM 6725 / KCTC 15123 / Z-1320) (Anaerocellum thermophilum).